The following is a 103-amino-acid chain: Large ribosomal subunit protein uL24 (103 aa).

This sequence belongs to the universal ribosomal protein uL24 family. In terms of assembly, part of the 50S ribosomal subunit.

Functionally, one of two assembly initiator proteins, it binds directly to the 5'-end of the 23S rRNA, where it nucleates assembly of the 50S subunit. Its function is as follows. One of the proteins that surrounds the polypeptide exit tunnel on the outside of the subunit. The protein is Large ribosomal subunit protein uL24 of Bacillus cytotoxicus (strain DSM 22905 / CIP 110041 / 391-98 / NVH 391-98).